The following is a 1227-amino-acid chain: ATP-dependent helicase/nuclease subunit A (1227 aa).

Positions 3–477 (VKYTPDQARA…IIFAENFRSS (475 aa)) constitute a UvrD-like helicase ATP-binding domain. 24 to 31 (ASAGSGKT) provides a ligand contact to ATP. The UvrD-like helicase C-terminal domain occupies 505–788 (GQLKFAAGYD…KLMTIHASKG (284 aa)).

Belongs to the helicase family. AddA subfamily. As to quaternary structure, heterodimer of AddA and AddB/RexB. Mg(2+) serves as cofactor.

It catalyses the reaction Couples ATP hydrolysis with the unwinding of duplex DNA by translocating in the 3'-5' direction.. The enzyme catalyses ATP + H2O = ADP + phosphate + H(+). Functionally, the heterodimer acts as both an ATP-dependent DNA helicase and an ATP-dependent, dual-direction single-stranded exonuclease. Recognizes the chi site generating a DNA molecule suitable for the initiation of homologous recombination. The AddA nuclease domain is required for chi fragment generation; this subunit has the helicase and 3' -&gt; 5' nuclease activities. The sequence is that of ATP-dependent helicase/nuclease subunit A from Lactobacillus delbrueckii subsp. bulgaricus (strain ATCC 11842 / DSM 20081 / BCRC 10696 / JCM 1002 / NBRC 13953 / NCIMB 11778 / NCTC 12712 / WDCM 00102 / Lb 14).